Reading from the N-terminus, the 334-residue chain is Protein-methionine-sulfoxide reductase catalytic subunit MsrP (334 aa).

Positions 1–44 (MKKVSRLTEADVTAESAFFMQRRQVLKALGITTAALSLPTAAHA) form a signal peptide, tat-type signal. Residues Asn88, 91–92 (YE), Cys146, Thr181, Asn233, Arg238, and 249–251 (GIK) each bind Mo-molybdopterin.

Belongs to the MsrP family. Heterodimer of a catalytic subunit (MsrP) and a heme-binding subunit (MsrQ). It depends on Mo-molybdopterin as a cofactor. In terms of processing, predicted to be exported by the Tat system. The position of the signal peptide cleavage has not been experimentally proven.

Its subcellular location is the periplasm. The catalysed reaction is L-methionyl-[protein] + a quinone + H2O = L-methionyl-(S)-S-oxide-[protein] + a quinol. It carries out the reaction L-methionyl-[protein] + a quinone + H2O = L-methionyl-(R)-S-oxide-[protein] + a quinol. In terms of biological role, part of the MsrPQ system that repairs oxidized periplasmic proteins containing methionine sulfoxide residues (Met-O), using respiratory chain electrons. Thus protects these proteins from oxidative-stress damage caused by reactive species of oxygen and chlorine generated by the host defense mechanisms. MsrPQ is essential for the maintenance of envelope integrity under bleach stress, rescuing a wide series of structurally unrelated periplasmic proteins from methionine oxidation. The catalytic subunit MsrP is non-stereospecific, being able to reduce both (R-) and (S-) diastereoisomers of methionine sulfoxide. This is Protein-methionine-sulfoxide reductase catalytic subunit MsrP from Cronobacter sakazakii (strain ATCC BAA-894) (Enterobacter sakazakii).